The chain runs to 47 residues: Lysis protein for colicin E5 (47 aa).

An N-terminal signal peptide occupies residues 1 to 19; sequence MKKITWIILLLLAAIILAA. Cys-20 carries N-palmitoyl cysteine lipidation. A lipid anchor (S-diacylglycerol cysteine) is attached at Cys-20.

The protein resides in the cell outer membrane. Its function is as follows. Lysis proteins are required for both colicin release and partial cell lysis. The chain is Lysis protein for colicin E5 (lys) from Escherichia coli.